Reading from the N-terminus, the 786-residue chain is MLLFPSTSLRLFFFLFLLFSSCFLQIRGDDDDDDISDDNIKVDPSLKFENPSLRQAYIALQSWKQAIFSDPFNFTANWNGSDVCSYNGIFCAPSPSSPKTRVVAGIDLNHADMAGYLPRELGLLTDLALFHLNSNRFCGEVPLTFKHMKLLFELDLSNNRFVGKFPNVVLSLPSLKFLDLRYNEFEGSIPSKLFDKELDAIFLNHNRFMFGIPENMGNSPVSALVLADNDLGGCIPGSIGLMGKTLNEIILSNDNLTGCLPPQIGNLKNVTVFDISFNRLSGPLPSSIGNMKSLEQLNVANNRFTGVIPSSICQLSNLENFTYSSNFFTGDAPRCVALLGDNVVVNGSMNCIDGKEDQRSSKECSSPASRSVDCSKFGCNNFFSPPPPSFKMSPTVRVLPPPPPSSKMSPTFRATPPPPSSKMSPSFRATPPPPSSKMSPSFRATPPPPSSKMSPSVKAYPPPPPPPEYEPSPPPPSSEMSPSVRAYPPPPPLSPPPPSPPPPYIYSSPPPPSPSPPPPYIYSSPPPVVNCPPTTQSPPPPKYEQTPSPREYYPSPSPPYYQYTSSPPPPTYYATQSPPPPPPPTYYAVQSPPPPPPVYYPPVTASPPPPPVYYTPVIQSPPPPPVYYSPVTQSPPPPPPVYYPPVTQSPPPSPVYYPPVTQSPPPPPVYYLPVTQSPPPPSPVYYPPVAKSPPPPSPVYYPPVTQSPPPPSTPVEYHPPASPNQSPPPEYQSPPPKGCNDSPSNDHHYQTPTPPSLPPPYYEDTPLPPIRGVSYASPPPPSIPYY.

The N-terminal stretch at 1–28 is a signal peptide; the sequence is MLLFPSTSLRLFFFLFLLFSSCFLQIRG. 2 N-linked (GlcNAc...) asparagine glycosylation sites follow: Asn-73 and Asn-79. LRR repeat units lie at residues 100 to 124, 125 to 147, 149 to 172, 173 to 196, 198 to 219, 221 to 243, 244 to 267, 268 to 291, and 292 to 315; these read TRVV…LGLL, TDLA…TFKH, KLLF…VLSL, PSLK…LFDK, LDAI…MGNS, VSAL…GLMG, KTLN…IGNL, KNVT…IGNM, and KSLE…ICQL. Residues Asn-255 and Asn-269 are each glycosylated (N-linked (GlcNAc...) asparagine). 2 N-linked (GlcNAc...) asparagine glycosylation sites follow: Asn-320 and Asn-346. Disordered regions lie at residues 352 to 372, 390 to 589, 624 to 645, and 694 to 786; these read IDGK…SRSV, FKMS…YYAV, PPVY…YYPP, and PPPS…IPYY. Over residues 353-362 the composition is skewed to basic and acidic residues; it reads DGKEDQRSSK. The tract at residues 384–786 is contains the Ser-Pro(4) repeats; sequence SPPPPSFKMS…SPPPPSIPYY (403 aa). Composition is skewed to pro residues over residues 460 to 477, 487 to 542, and 566 to 589; these read YPPP…PPPS, YPPP…PPPK, and SPPP…YYAV. 4 stretches are compositionally biased toward pro residues: residues 694-713, 720-737, 752-769, and 777-786; these read PPPS…PPST, PASP…PPPK, PTPP…PLPP, and SPPPPSIPYY.

Hydroxylated on proline residues in the S-P-P-P-P repeat. Post-translationally, O-glycosylated on hydroxyprolines. Mostly expressed in roots, also present in stems at low levels. In roots, confined to differentiation zones, the collet, and meristematic cells of tips.

It localises to the secreted. It is found in the cell wall. Modulates cell morphogenesis by regulating cell wall formation and assembly, and/or growth polarization. Together with LRX2, component of the extracellular mechanism regulating root hair morphogenesis and elongation. This is Leucine-rich repeat extensin-like protein 2 (LRX2) from Arabidopsis thaliana (Mouse-ear cress).